Here is a 112-residue protein sequence, read N- to C-terminus: HTH-type transcriptional regulator YodB (112 aa).

Residues 6–105 (CPKMESAFSL…WADQFCEPGD (100 aa)) form the HTH hxlR-type domain.

Its function is as follows. Negatively regulates yodC and azoR1 which may contribute to the degradation of aromatic compounds. Probably positively regulates the catechol-specific transcription of mhqNOP, mhqED, and mhqA. This Bacillus subtilis (strain 168) protein is HTH-type transcriptional regulator YodB (yodB).